The sequence spans 339 residues: Trace amine-associated receptor 1 (339 aa).

At 1 to 25 (MMPFCHNIINISCVKNNWSNDVRAS) the chain is on the extracellular side. Disulfide bonds link Cys-5-Cys-178, Cys-13-Cys-88, and Cys-96-Cys-182. 2 N-linked (GlcNAc...) asparagine glycosylation sites follow: Asn-10 and Asn-17. The chain crosses the membrane as a helical span at residues 26 to 46 (LYSLMVLIILTTLVGNLIVIV). The Cytoplasmic segment spans residues 47–59 (SISHFKELHTPTN). The helical transmembrane segment at 60–80 (WLIHSMATVDFLPGCLVMPYS) threads the bilayer. Residues 81–98 (MVRSAEHCWYFGEVFCKI) are Extracellular-facing. Residues 99 to 119 (HTSTDIMLSSASIFHLSFISI) form a helical membrane-spanning segment. Asp-103 lines the 2-phenylethylamine pocket. At 120-136 (DRYYAVCDPLRYKAKIN) the chain is on the cytoplasmic side. The helical transmembrane segment at 137–157 (ILVICVMIFISWSVPAVFAFG) threads the bilayer. The Extracellular portion of the chain corresponds to 158 to 188 (MIFLELNFKGAEEIYYKHVHCRGGCSVFFSK). Residues 189 to 209 (ISGVLTFMTSFYIPGSIMLCV) form a helical membrane-spanning segment. The Cytoplasmic segment spans residues 210-252 (YYRIYLIAKEQARLINDANQKLQIGLEMKNGISQSKERKAVKT). The helical transmembrane segment at 253-273 (LGIVMGVFLICWCPFFICTVM) threads the bilayer. The Extracellular portion of the chain corresponds to 274 to 287 (DPFLHYIIPPTLND). The chain crosses the membrane as a helical span at residues 288-308 (VLIWFGYLNSTFNPMVYAFFY). The Cytoplasmic portion of the chain corresponds to 309–339 (PWFRKALKMMLFGKIFQKDSSRCKLFLELSS).

Belongs to the G-protein coupled receptor 1 family.

The protein resides in the endomembrane system. It is found in the endoplasmic reticulum membrane. The protein localises to the cell membrane. Intracellular G-protein coupled receptor for trace amines, which recognizes endogenous amine-containing metabolites such as beta-phenylethylamine (beta-PEA), 3-iodothyronamine (T1AM), isoamylamine (IAA), cadaverine (CAD), cyclohexylamine (CHA), p-tyramine (p-TYR), trimethylamine (TMA), octopamine and tryptamine. Also functions as a receptor for various drugs and psychoactive substances, such as amphetamine and methamphetamine. Unresponsive to classical biogenic amines, such as epinephrine and histamine and only partially activated by dopamine and serotonin. Expressed in both the central and peripheral nervous system: TAAR1 activation regulates the activity of several neurotransmitter signaling pathways by (1) decreasing the basal firing rates of the neurons involved and by (2) lowering the sensitivity of receptors to neurotransmitters. Ligand binding causes a conformation change that triggers signaling via guanine nucleotide-binding proteins (G proteins) and modulates the activity of downstream effectors. TAAR1 is coupled with different G(i)/G(o)-, G(s)- or G(q)/G(11) classes of G alpha proteins depending on the ligand. CAD-binding is coupled to G(i)/G(o) G alpha proteins and mediates inhibition of adenylate cyclase activity. T1AM- or beta-PEA-binding is coupled to G(s) G alpha proteins and mediates activation of adenylate cyclase activity. CHA- or IAA-binding is coupled to G(q)/G(11) G alpha proteins and activates phospholipase C-beta, releasing diacylglycerol (DAG) and inositol 1,4,5-trisphosphate (IP3) second messengers. TMA-binding is coupled with all three G(i)/G(o)-, G(s)- or G(q)/G(11) G alpha protein subtypes. This chain is Trace amine-associated receptor 1 (TAAR1), found in Pan troglodytes (Chimpanzee).